The primary structure comprises 457 residues: Phosphomethylpyrimidine synthase (457 aa).

Substrate-binding positions include Asn-80, Met-109, Tyr-139, His-175, 195–197, 236–239, and Glu-275; these read SRG and DSLR. Zn(2+) is bound at residue His-279. Tyr-302 contacts substrate. His-343 is a Zn(2+) binding site. The [4Fe-4S] cluster site is built by Cys-423, Cys-426, and Cys-431.

The protein belongs to the ThiC family. [4Fe-4S] cluster is required as a cofactor.

The enzyme catalyses 5-amino-1-(5-phospho-beta-D-ribosyl)imidazole + S-adenosyl-L-methionine = 4-amino-2-methyl-5-(phosphooxymethyl)pyrimidine + CO + 5'-deoxyadenosine + formate + L-methionine + 3 H(+). It functions in the pathway cofactor biosynthesis; thiamine diphosphate biosynthesis. In terms of biological role, catalyzes the synthesis of the hydroxymethylpyrimidine phosphate (HMP-P) moiety of thiamine from aminoimidazole ribotide (AIR) in a radical S-adenosyl-L-methionine (SAM)-dependent reaction. This chain is Phosphomethylpyrimidine synthase, found in Nostoc sp. (strain PCC 7120 / SAG 25.82 / UTEX 2576).